A 126-amino-acid chain; its full sequence is Large ribosomal subunit protein uL24 (126 aa).

The tract at residues 1-23 (MKFSRDVTSSRRKQRKAHFGAPS) is disordered.

This sequence belongs to the universal ribosomal protein uL24 family. As to quaternary structure, component of the large ribosomal subunit (LSU). Mature yeast ribosomes consist of a small (40S) and a large (60S) subunit. The 40S small subunit contains 1 molecule of ribosomal RNA (18S rRNA) and at least 33 different proteins. The large 60S subunit contains 3 rRNA molecules (25S, 5.8S and 5S rRNA) and at least 46 different proteins.

The protein resides in the cytoplasm. It localises to the nucleus. The protein localises to the nucleolus. Functionally, component of the ribosome, a large ribonucleoprotein complex responsible for the synthesis of proteins in the cell. The small ribosomal subunit (SSU) binds messenger RNAs (mRNAs) and translates the encoded message by selecting cognate aminoacyl-transfer RNA (tRNA) molecules. The large subunit (LSU) contains the ribosomal catalytic site termed the peptidyl transferase center (PTC), which catalyzes the formation of peptide bonds, thereby polymerizing the amino acids delivered by tRNAs into a polypeptide chain. The nascent polypeptides leave the ribosome through a tunnel in the LSU and interact with protein factors that function in enzymatic processing, targeting, and the membrane insertion of nascent chains at the exit of the ribosomal tunnel. In Schizosaccharomyces pombe (strain 972 / ATCC 24843) (Fission yeast), this protein is Large ribosomal subunit protein uL24 (rpl26).